Here is a 62-residue protein sequence, read N- to C-terminus: Photosystem II reaction center protein Z (62 aa).

2 consecutive transmembrane segments (helical) span residues 8–28 and 41–61; these read LVSILILLSFALVVGVPVILV and YASAGLWFGLVIVTAAFNSFV.

It belongs to the PsbZ family. In terms of assembly, PSII is composed of 1 copy each of membrane proteins PsbA, PsbB, PsbC, PsbD, PsbE, PsbF, PsbH, PsbI, PsbJ, PsbK, PsbL, PsbM, PsbT, PsbX, PsbY, PsbZ, Psb30/Ycf12, at least 3 peripheral proteins of the oxygen-evolving complex and a large number of cofactors. It forms dimeric complexes.

The protein resides in the plastid. Its subcellular location is the chloroplast thylakoid membrane. May control the interaction of photosystem II (PSII) cores with the light-harvesting antenna, regulates electron flow through the 2 photosystem reaction centers. PSII is a light-driven water plastoquinone oxidoreductase, using light energy to abstract electrons from H(2)O, generating a proton gradient subsequently used for ATP formation. The chain is Photosystem II reaction center protein Z from Guillardia theta (Cryptophyte).